Reading from the N-terminus, the 202-residue chain is GTP cyclohydrolase 1 (202 aa).

Residues Cys-90, His-93, and Cys-163 each contribute to the Zn(2+) site.

Belongs to the GTP cyclohydrolase I family. As to quaternary structure, toroid-shaped homodecamer, composed of two pentamers of five dimers.

It carries out the reaction GTP + H2O = 7,8-dihydroneopterin 3'-triphosphate + formate + H(+). It functions in the pathway cofactor biosynthesis; 7,8-dihydroneopterin triphosphate biosynthesis; 7,8-dihydroneopterin triphosphate from GTP: step 1/1. This is GTP cyclohydrolase 1 from Mycolicibacterium vanbaalenii (strain DSM 7251 / JCM 13017 / BCRC 16820 / KCTC 9966 / NRRL B-24157 / PYR-1) (Mycobacterium vanbaalenii).